Reading from the N-terminus, the 482-residue chain is Glycogen synthase (482 aa).

Residue K15 participates in ADP-alpha-D-glucose binding.

It belongs to the glycosyltransferase 1 family. Bacterial/plant glycogen synthase subfamily.

It carries out the reaction [(1-&gt;4)-alpha-D-glucosyl](n) + ADP-alpha-D-glucose = [(1-&gt;4)-alpha-D-glucosyl](n+1) + ADP + H(+). Its pathway is glycan biosynthesis; glycogen biosynthesis. Synthesizes alpha-1,4-glucan chains using ADP-glucose. The polypeptide is Glycogen synthase (Elusimicrobium minutum (strain Pei191)).